We begin with the raw amino-acid sequence, 491 residues long: Nickel-binding protein NikA (491 aa).

Positions 1–18 are cleaved as a signal peptide; sequence MKFKRLATIFSAVLVLSG. C19 is lipidated: N-palmitoyl cysteine. Residue C19 is the site of S-diacylglycerol cysteine attachment.

This sequence belongs to the bacterial solute-binding protein 5 family. The complex is composed of two ATP-binding proteins (NikD and NikE), two transmembrane proteins (NikB and NikC) and a solute-binding protein (NikA).

The protein resides in the cell membrane. In terms of biological role, part of the ABC transporter complex NikABCDE (Opp2) involved in nickel import. Binds nickel and transfers it to the membrane-bound permease. Required for full urease activity and plays a significant role in the virulence of S.aureus during urinary tract infection (UTI). May bind nickel via a nickel-chelator. This Staphylococcus aureus (strain NCTC 8325 / PS 47) protein is Nickel-binding protein NikA.